The primary structure comprises 431 residues: 5-methylthioadenosine/S-adenosylhomocysteine deaminase (431 aa).

Zn(2+)-binding residues include histidine 64 and histidine 66. Positions 93, 145, and 183 each coordinate substrate. A Zn(2+)-binding site is contributed by histidine 210. Positions 213 and 299 each coordinate substrate. Residue aspartate 299 participates in Zn(2+) binding.

This sequence belongs to the metallo-dependent hydrolases superfamily. MTA/SAH deaminase family. Zn(2+) serves as cofactor.

The catalysed reaction is S-adenosyl-L-homocysteine + H2O + H(+) = S-inosyl-L-homocysteine + NH4(+). The enzyme catalyses S-methyl-5'-thioadenosine + H2O + H(+) = S-methyl-5'-thioinosine + NH4(+). Functionally, catalyzes the deamination of 5-methylthioadenosine and S-adenosyl-L-homocysteine into 5-methylthioinosine and S-inosyl-L-homocysteine, respectively. Is also able to deaminate adenosine. The polypeptide is 5-methylthioadenosine/S-adenosylhomocysteine deaminase (Syntrophomonas wolfei subsp. wolfei (strain DSM 2245B / Goettingen)).